The following is a 457-amino-acid chain: Gamma-aminobutyric acid receptor subunit gamma-4 (457 aa).

The first 21 residues, 1–21 (MPAMVLLLCLALGPALRSARC), serve as a signal peptide directing secretion. At 22 to 256 (ESTEEYDYDY…VSFDLSRRMG (235 aa)) the chain is on the extracellular side. 2 N-linked (GlcNAc...) asparagine glycosylation sites follow: asparagine 35 and asparagine 112. Cysteine 173 and cysteine 187 are oxidised to a cystine. The N-linked (GlcNAc...) asparagine glycan is linked to asparagine 230. 3 consecutive transmembrane segments (helical) span residues 257-279 (YFAI…SFWI), 283-305 (STPA…STIS), and 317-339 (AMDL…YATL). The Cytoplasmic segment spans residues 340-433 (NYLVGNKKPL…VRIHISRLDS (94 aa)). The helical transmembrane segment at 434 to 457 (YSRVFFPTAFLLFNIVYWIAYLYL) threads the bilayer.

This sequence belongs to the ligand-gated ion channel (TC 1.A.9) family. Gamma-aminobutyric acid receptor (TC 1.A.9.5) subfamily. GABRG4 sub-subfamily. As to quaternary structure, generally pentameric. There are five types of GABA(A) receptor chains: alpha, beta, gamma, delta, and rho. As to expression, abundant in several brain regions, including the ectostriatum, nucleus rotundus and hyperstriatum ventrale.

It is found in the postsynaptic cell membrane. Its subcellular location is the cell membrane. GABA, the major inhibitory neurotransmitter in the vertebrate brain, mediates neuronal inhibition by binding to the GABA/benzodiazepine receptor and opening an integral chloride channel. The chain is Gamma-aminobutyric acid receptor subunit gamma-4 (GABRG4) from Gallus gallus (Chicken).